We begin with the raw amino-acid sequence, 130 residues long: MSVAQNYGTGRRKSSTARVFIKPGSGNISINGRTIEDFFGRETLRMIVRQPLVVAESEDRFDIAITVKGGGISGQAGAIRHGLTRALMDYDETLRPALRKAGYVTRDARKVERKKVGLRKARKRPQYSKR.

Belongs to the universal ribosomal protein uS9 family.

The chain is Small ribosomal subunit protein uS9 from Marinobacter nauticus (strain ATCC 700491 / DSM 11845 / VT8) (Marinobacter aquaeolei).